Here is a 219-residue protein sequence, read N- to C-terminus: Large ribosomal subunit protein uL4 (219 aa).

The interval 43–101 is disordered; the sequence is AAARQGTHKTKRRGEVRGGGKKPYRQKGTGRARQGSTRAPQFAGGGVVHGPQPRDYSQR. Basic residues predominate over residues 61 to 72; it reads GGKKPYRQKGTG.

The protein belongs to the universal ribosomal protein uL4 family. As to quaternary structure, part of the 50S ribosomal subunit.

Its function is as follows. One of the primary rRNA binding proteins, this protein initially binds near the 5'-end of the 23S rRNA. It is important during the early stages of 50S assembly. It makes multiple contacts with different domains of the 23S rRNA in the assembled 50S subunit and ribosome. In terms of biological role, forms part of the polypeptide exit tunnel. The chain is Large ribosomal subunit protein uL4 from Streptomyces coelicolor (strain ATCC BAA-471 / A3(2) / M145).